The chain runs to 59 residues: Single-pass membrane and coiled-coil domain-containing protein 4 (59 aa).

Positions 1 to 23 are disordered; that stretch reads MRQLKGKPKKETSKDKKERKQAM. Basic and acidic residues predominate over residues 9-22; that stretch reads KKETSKDKKERKQA. Residues 9–31 are a coiled coil; it reads KKETSKDKKERKQAMQEARQQIT. A helical transmembrane segment spans residues 32 to 52; it reads TVVLPTLAVVVLLIVVFVYVA.

The protein belongs to the SMCO4 family.

The protein resides in the membrane. The sequence is that of Single-pass membrane and coiled-coil domain-containing protein 4 (Smco4) from Mus musculus (Mouse).